Reading from the N-terminus, the 70-residue chain is Beta-insect excitatory toxin LqqIT1 (70 aa).

The 64-residue stretch at 2–65 (KNGYAVDSSG…ISDARKKYCD (64 aa)) folds into the LCN-type CS-alpha/beta domain. 4 cysteine pairs are disulfide-bonded: Cys-16-Cys-37, Cys-22-Cys-42, Cys-26-Cys-44, and Cys-38-Cys-64.

It belongs to the long (4 C-C) scorpion toxin superfamily. Sodium channel inhibitor family. Beta subfamily. As to expression, expressed by the venom gland.

The protein resides in the secreted. Its function is as follows. Excitatory insect beta-toxins induce a spastic paralysis. They bind voltage-independently at site-4 of sodium channels (Nav) and shift the voltage of activation toward more negative potentials thereby affecting sodium channel activation and promoting spontaneous and repetitive firing. In vivo, this toxin induces a fast excitatory contraction paralysis on fly larvae. It is active only on insects. The protein is Beta-insect excitatory toxin LqqIT1 of Leiurus quinquestriatus quinquestriatus (Egyptian scorpion).